The primary structure comprises 545 residues: Hyaluronidase PH-20 (545 aa).

The N-terminal stretch at 1–35 (MGVLKFKHIFFGSAVELSGVFQIVFIFLLIPCCLT) is a signal peptide. 2 disulfides stabilise this stretch: Cys60–Cys355 and Cys224–Cys239. N-linked (GlcNAc...) asparagine glycosylation is present at Asn82. Glu148 acts as the Proton donor in catalysis. Asn180 carries an N-linked (GlcNAc...) asparagine glycan. An N-linked (GlcNAc...) asparagine glycan is attached at Asn372. 3 cysteine pairs are disulfide-bonded: Cys380-Cys391, Cys385-Cys439, and Cys441-Cys468.

Belongs to the glycosyl hydrolase 56 family. Testis.

The protein resides in the cell membrane. It catalyses the reaction Random hydrolysis of (1-&gt;4)-linkages between N-acetyl-beta-D-glucosamine and D-glucuronate residues in hyaluronate.. Involved in sperm-egg adhesion. Upon fertilization sperm must first penetrate a layer of cumulus cells that surrounds the egg before reaching the zona pellucida. The cumulus cells are embedded in a matrix containing hyaluronic acid which is formed prior to ovulation. This protein aids in penetrating the layer of cumulus cells by digesting hyaluronic acid. The sequence is that of Hyaluronidase PH-20 (SPAM1) from Oryctolagus cuniculus (Rabbit).